The following is a 247-amino-acid chain: Protein NipSnap homolog 3A (247 aa).

2 positions are modified to N6-acetyllysine: K48 and K166.

It belongs to the NipSnap family.

Its subcellular location is the cytoplasm. The protein resides in the cytosol. In Pongo abelii (Sumatran orangutan), this protein is Protein NipSnap homolog 3A (NIPSNAP3A).